The primary structure comprises 472 residues: Tubulin gamma chain (472 aa).

142–148 (AGGTGSG) contributes to the GTP binding site.

Belongs to the tubulin family.

Its subcellular location is the cytoplasm. It localises to the cytoskeleton. It is found in the microtubule organizing center. Functionally, tubulin is the major constituent of microtubules. The gamma chain is found at microtubule organizing centers (MTOC) such as the spindle poles, suggesting that it is involved in the minus-end nucleation of microtubule assembly. This chain is Tubulin gamma chain (TUBG), found in Anemia phyllitidis (Fern).